Consider the following 254-residue polypeptide: 3-deoxy-manno-octulosonate cytidylyltransferase (254 aa).

The protein belongs to the KdsB family.

Its subcellular location is the cytoplasm. The enzyme catalyses 3-deoxy-alpha-D-manno-oct-2-ulosonate + CTP = CMP-3-deoxy-beta-D-manno-octulosonate + diphosphate. It participates in nucleotide-sugar biosynthesis; CMP-3-deoxy-D-manno-octulosonate biosynthesis; CMP-3-deoxy-D-manno-octulosonate from 3-deoxy-D-manno-octulosonate and CTP: step 1/1. The protein operates within bacterial outer membrane biogenesis; lipopolysaccharide biosynthesis. Its function is as follows. Activates KDO (a required 8-carbon sugar) for incorporation into bacterial lipopolysaccharide in Gram-negative bacteria. The chain is 3-deoxy-manno-octulosonate cytidylyltransferase from Pseudomonas aeruginosa (strain ATCC 15692 / DSM 22644 / CIP 104116 / JCM 14847 / LMG 12228 / 1C / PRS 101 / PAO1).